We begin with the raw amino-acid sequence, 384 residues long: PqqA peptide cyclase (384 aa).

Positions 14–226 constitute a Radical SAM core domain; sequence IPAPVGLLAE…IRIVEAARER (213 aa). C28, C32, and C35 together coordinate [4Fe-4S] cluster.

The protein belongs to the radical SAM superfamily. PqqE family. Interacts with PqqD. The interaction is necessary for activity of PqqE. Requires [4Fe-4S] cluster as cofactor.

It carries out the reaction [PQQ precursor protein] + S-adenosyl-L-methionine = E-Y cross-linked-[PQQ precursor protein] + 5'-deoxyadenosine + L-methionine + H(+). Its pathway is cofactor biosynthesis; pyrroloquinoline quinone biosynthesis. Functionally, catalyzes the cross-linking of a glutamate residue and a tyrosine residue in the PqqA protein as part of the biosynthesis of pyrroloquinoline quinone (PQQ). The protein is PqqA peptide cyclase of Methylorubrum populi (strain ATCC BAA-705 / NCIMB 13946 / BJ001) (Methylobacterium populi).